The following is a 126-amino-acid chain: MANKQVEISMAEWDVMNIIWGKKSVSANEIVVEIQKYKEVSDKTIRTLITRLYKKEIIKRYKSENIYFYSSNIKEDDIKMKTAKTFLNKLYGGDMKSLVLNFAKNEELNNKEIEELRDILNDISKK.

A DNA-binding region (H-T-H motif) is located at residues 7 to 71 (EISMAEWDVM…KSENIYFYSS (65 aa)). The tract at residues 74-126 (KEDDIKMKTAKTFLNKLYGGDMKSLVLNFAKNEELNNKEIEELRDILNDISKK) is important for dimerization.

This sequence belongs to the BlaI transcriptional regulatory family. As to quaternary structure, homodimer. In terms of processing, upon exposure to beta-lactams, the protease BlaR1 is activated and cleaves BlaI at a single site. This proteolytic cleavage impairs dimerization and abolishes repressor activity.

Its subcellular location is the cytoplasm. Its function is as follows. Transcriptional repressor that constitutively blocks expression of beta-lactamase. Binds DNA as a dimer. In Staphylococcus aureus, this protein is Penicillinase repressor (blaI).